Consider the following 318-residue polypeptide: Probable serine/threonine-protein kinase MRK1 homolog (318 aa).

Residues Tyr-40–Phe-313 enclose the Protein kinase domain. ATP-binding positions include Ile-46–Val-54 and Lys-68. Asp-159 (proton acceptor) is an active-site residue.

This sequence belongs to the protein kinase superfamily. CMGC Ser/Thr protein kinase family. GSK-3 subfamily.

It is found in the cytoplasm. The protein localises to the nucleus. It catalyses the reaction L-seryl-[protein] + ATP = O-phospho-L-seryl-[protein] + ADP + H(+). The enzyme catalyses L-threonyl-[protein] + ATP = O-phospho-L-threonyl-[protein] + ADP + H(+). In terms of biological role, may play a role in the initiation and completion of mitosis. The sequence is that of Probable serine/threonine-protein kinase MRK1 homolog (MRK1) from Encephalitozoon cuniculi (strain GB-M1) (Microsporidian parasite).